The sequence spans 66 residues: Putative alpha-neurotoxin RjAa44 (66 aa).

One can recognise an LCN-type CS-alpha/beta domain in the interval 1–60; that stretch reads KEGYPVDWGNCKYECMSDAYCKDLCADRKAKSGYCYKLNWSCYCEGLPDDSPIKTNGHCR. 4 disulfide bridges follow: Cys-11/Cys-59, Cys-15/Cys-35, Cys-21/Cys-42, and Cys-25/Cys-44.

This sequence belongs to the long (4 C-C) scorpion toxin superfamily. Sodium channel inhibitor family. Alpha subfamily. In terms of tissue distribution, expressed by the venom gland.

The protein resides in the secreted. Functionally, alpha toxins bind voltage-independently at site-3 of sodium channels (Nav) and inhibit the inactivation of the activated channels, thereby blocking neuronal transmission. This is Putative alpha-neurotoxin RjAa44 from Rhopalurus junceus (Caribbean blue scorpion).